A 510-amino-acid chain; its full sequence is Monocarboxylate transporter 14 (510 aa).

The Cytoplasmic segment spans residues M1 to N27. Transmembrane regions (helical) follow at residues I28–M48, W74–I94, A103–V123, F127–V147, L159–L179, and A191–M209. Residues P214 to N255 are disordered. Polar residues predominate over residues S233–G244. 6 helical membrane passes run M315 to I335, F353 to I373, I379 to L399, L408 to V428, G443 to I463, and F474 to I494. The Cytoplasmic portion of the chain corresponds to R495–V510.

This sequence belongs to the major facilitator superfamily. Monocarboxylate porter (TC 2.A.1.13) family.

It localises to the cell membrane. Its function is as follows. Proton-linked monocarboxylate transporter. May catalyze the transport of monocarboxylates across the plasma membrane. This is Monocarboxylate transporter 14 (SLC16A14) from Homo sapiens (Human).